A 166-amino-acid polypeptide reads, in one-letter code: Transcription antitermination protein NusB (166 aa).

Positions Met1–Asp18 are enriched in basic and acidic residues. The tract at residues Met1 to Glu30 is disordered.

This sequence belongs to the NusB family.

Functionally, involved in transcription antitermination. Required for transcription of ribosomal RNA (rRNA) genes. Binds specifically to the boxA antiterminator sequence of the ribosomal RNA (rrn) operons. This Pseudomonas fluorescens (strain Pf0-1) protein is Transcription antitermination protein NusB.